Consider the following 378-residue polypeptide: Plant intracellular Ras-group-related LRR protein 8 (378 aa).

The 77-residue stretch at 10–86 (PTITVQVKFG…VMLMASQGLH (77 aa)) folds into the Ubiquitin-like domain. A disordered region spans residues 85–120 (LHQGDGPITKNSSVPAPSTRRASNVKEAQIQKSDTN). Residues 93-106 (TKNSSVPAPSTRRA) are compositionally biased toward polar residues. LRR repeat units follow at residues 129-152 (WKAT…VWGC), 153-176 (GSSI…IAAL), 178-201 (SLQK…GLTC), 202-225 (VQTL…LGSI), 226-250 (THLR…LLKH), 252-271 (EILI…IGGC), 272-293 (ESLN…AFGN), 294-317 (LQHL…FFIK), and 319-344 (SQLI…GWEE).

This sequence belongs to the SHOC2 family. In terms of tissue distribution, widely expressed except in panicles.

In terms of biological role, leucine-rich repeat protein that likely mediates protein interactions, possibly in the context of signal transduction. The sequence is that of Plant intracellular Ras-group-related LRR protein 8 (IRL8) from Oryza sativa subsp. japonica (Rice).